A 479-amino-acid polypeptide reads, in one-letter code: Dihydrolipoyl dehydrogenase, mitochondrial (479 aa).

A mitochondrion-targeting transit peptide spans 1–19 (FNRXSPGLQGVSSVPLRTY). An N6-acetyllysine; alternate modification is found at K50. N6-succinyllysine; alternate is present on K50. FAD contacts are provided by residues 55–64 (EKNETLGGTC) and K73. A disulfide bond links C64 and C69. N6-acetyllysine; alternate is present on residues K88, K106, K116, and K127. 4 positions are modified to N6-succinyllysine; alternate: K88, K106, K116, and K127. Position 138 (G138) interacts with FAD. N6-succinyllysine is present on residues K143 and K150. 167–169 (TGS) contributes to the FAD binding site. NAD(+) contacts are provided by residues 204-211 (GAGVIGVE) and E227. Residues K257 and K261 each carry the N6-succinyllysine modification. An NAD(+)-binding site is contributed by V262. The residue at position 269 (S269) is a Phosphoserine. Residue G298 coordinates NAD(+). K330 carries the N6-acetyllysine modification. FAD-binding positions include D339 and 345–348 (MLAH). K394 bears the N6-acetyllysine; alternate mark. K394 bears the N6-succinyllysine; alternate mark. K401 and K404 each carry N6-acetyllysine. K414 carries the N6-succinyllysine modification. The active-site Proton acceptor is the H471.

Belongs to the class-I pyridine nucleotide-disulfide oxidoreductase family. Homodimer. Part of the multimeric pyruvate dehydrogenase complex that contains multiple copies of pyruvate dehydrogenase (subunits PDHA (PDHA1 or PDHA2) and PDHB, E1), dihydrolipoamide acetyltransferase (DLAT, E2) and lipoamide dehydrogenase (DLD, E3). These subunits are bound to an inner core composed of about 48 DLAT and 12 PDHX molecules (by non covalent bonds). The 2-oxoglutarate dehydrogenase complex is composed of OGDH (2-oxoglutarate dehydrogenase; E1), DLST (dihydrolipoamide succinyltransferase; E2) and DLD (dihydrolipoamide dehydrogenase; E3). It contains multiple copies of the three enzymatic components (E1, E2 and E3). In the nucleus, the 2-oxoglutarate dehydrogenase complex associates with KAT2A. Interacts with PDHX. It depends on FAD as a cofactor. In terms of processing, tyrosine phosphorylated. In terms of tissue distribution, expressed in testis (at protein level).

Its subcellular location is the mitochondrion matrix. The protein resides in the nucleus. It localises to the cell projection. It is found in the cilium. The protein localises to the flagellum. Its subcellular location is the cytoplasmic vesicle. The protein resides in the secretory vesicle. It localises to the acrosome. It catalyses the reaction N(6)-[(R)-dihydrolipoyl]-L-lysyl-[protein] + NAD(+) = N(6)-[(R)-lipoyl]-L-lysyl-[protein] + NADH + H(+). Its function is as follows. Lipoamide dehydrogenase is a component of the glycine cleavage system as well as an E3 component of three alpha-ketoacid dehydrogenase complexes (pyruvate-, alpha-ketoglutarate-, and branched-chain amino acid-dehydrogenase complex). The 2-oxoglutarate dehydrogenase complex is mainly active in the mitochondrion. A fraction of the 2-oxoglutarate dehydrogenase complex also localizes in the nucleus and is required for lysine succinylation of histones: associates with KAT2A on chromatin and provides succinyl-CoA to histone succinyltransferase KAT2A. In monomeric form may have additional moonlighting function as serine protease. Involved in the hyperactivation of spermatazoa during capacitation and in the spermatazoal acrosome reaction. The protein is Dihydrolipoyl dehydrogenase, mitochondrial (DLD) of Mesocricetus auratus (Golden hamster).